Reading from the N-terminus, the 376-residue chain is Probable deoxyhypusine synthase (376 aa).

NAD(+) contacts are provided by residues 105-109 (SNLVS), 131-133 (TAG), glutamate 137, and aspartate 238. 136–137 (EE) lines the spermidine pocket. Spermidine is bound at residue aspartate 243. Glycine 283 contributes to the NAD(+) binding site. Spermidine is bound at residue histidine 288. 308–309 (TG) contributes to the NAD(+) binding site. Residues 314-316 (GSD) and 323-329 (EAVSWGK) contribute to the spermidine site. Residue lysine 329 is the Nucleophile of the active site. 342 to 343 (EA) provides a ligand contact to NAD(+).

The protein belongs to the deoxyhypusine synthase family. It depends on NAD(+) as a cofactor.

The catalysed reaction is [eIF5A protein]-L-lysine + spermidine = [eIF5A protein]-deoxyhypusine + propane-1,3-diamine. It functions in the pathway protein modification; eIF5A hypusination. Its function is as follows. Catalyzes the NAD-dependent oxidative cleavage of spermidine and the subsequent transfer of the butylamine moiety of spermidine to the epsilon-amino group of a critical lysine residue of the eIF-5A precursor protein to form the intermediate deoxyhypusine residue. This is the first step of the post-translational modification of that lysine into an unusual amino acid residue named hypusine. Hypusination is unique to mature eIF-5A factor and is essential for its function. In Dictyostelium discoideum (Social amoeba), this protein is Probable deoxyhypusine synthase (dhps).